The chain runs to 184 residues: Protein N-terminal glutamine amidohydrolase (184 aa).

Active-site residues include Cys-14, His-63, and Asp-78.

This sequence belongs to the NTAQ1 family. Monomer.

The catalysed reaction is N-terminal L-glutaminyl-[protein] + H2O = N-terminal L-glutamyl-[protein] + NH4(+). Functionally, mediates the side-chain deamidation of N-terminal glutamine residues to glutamate, an important step in N-end rule pathway of protein degradation. Conversion of the resulting N-terminal glutamine to glutamate renders the protein susceptible to arginylation, polyubiquitination and degradation as specified by the N-end rule. Does not act on substrates with internal or C-terminal glutamine and does not act on non-glutamine residues in any position. The protein is Protein N-terminal glutamine amidohydrolase of Caenorhabditis elegans.